A 118-amino-acid chain; its full sequence is Large ribosomal subunit protein bL19 (118 aa).

The protein belongs to the bacterial ribosomal protein bL19 family.

Its function is as follows. This protein is located at the 30S-50S ribosomal subunit interface and may play a role in the structure and function of the aminoacyl-tRNA binding site. This is Large ribosomal subunit protein bL19 from Salinispora tropica (strain ATCC BAA-916 / DSM 44818 / JCM 13857 / NBRC 105044 / CNB-440).